Consider the following 209-residue polypeptide: Ribosomal RNA large subunit methyltransferase E (209 aa).

Residues Gly63, Trp65, Asp83, Asp99, and Asp124 each contribute to the S-adenosyl-L-methionine site. The active-site Proton acceptor is Lys164.

This sequence belongs to the class I-like SAM-binding methyltransferase superfamily. RNA methyltransferase RlmE family.

The protein resides in the cytoplasm. It catalyses the reaction uridine(2552) in 23S rRNA + S-adenosyl-L-methionine = 2'-O-methyluridine(2552) in 23S rRNA + S-adenosyl-L-homocysteine + H(+). Specifically methylates the uridine in position 2552 of 23S rRNA at the 2'-O position of the ribose in the fully assembled 50S ribosomal subunit. This is Ribosomal RNA large subunit methyltransferase E from Vibrio vulnificus (strain CMCP6).